The primary structure comprises 359 residues: G-protein coupled receptor 15 (359 aa).

Over 1–33 the chain is Extracellular; sequence MDPEETSVYLDYYYATSPNPDIRETHSHVPYTS. Residues 34–54 form a helical membrane-spanning segment; sequence VFLPVFYTAVFLTGVLGNLVL. Residues 55–69 lie on the Cytoplasmic side of the membrane; sequence MGALHFKPGSRRLID. A helical membrane pass occupies residues 70–90; the sequence is IFIINLAASDFIFLVTLPLWV. The Extracellular portion of the chain corresponds to 91 to 120; that stretch reads DKEASLGLWRTGSFLCKGSSYMISVNMHCS. A helical membrane pass occupies residues 121 to 141; it reads VFLLTCMSVDRYLAIVCPVVS. At 142-149 the chain is on the cytoplasmic side; it reads RKFRRTDC. A helical transmembrane segment spans residues 150 to 170; it reads AYVVCASIWFISCLLGLPTLL. Residues 171 to 192 are Extracellular-facing; it reads SRELTLIDDKPYCAEKKATPLK. Residues 193 to 213 traverse the membrane as a helical segment; the sequence is LIWSLVALIFTFFVPLLNIVT. Residues 214 to 239 lie on the Cytoplasmic side of the membrane; it reads CYCCIARKLCAHYQQSGRHNKKLKKS. A helical membrane pass occupies residues 240–260; the sequence is IKIILIVVAAFLVSWLPFNTF. Residues 261-283 lie on the Extracellular side of the membrane; it reads KLLAIVSGLQERYFPSAMLQLGM. A helical membrane pass occupies residues 284-304; it reads EVSGPLAFANSCVNPFIYYIF. Topologically, residues 305-359 are cytoplasmic; the sequence is DSYIRRAIVHCLCPCLKNYDFGSSTETSDSHLTKALSTFIHAEDFTRRRKRSVSL. The residue at position 358 (Ser358) is a Phosphoserine.

This sequence belongs to the G-protein coupled receptor 1 family. Interacts with adapter YWHAE; this interaction promotes ER-to-Golgi transport of GPR15. Phosphorylation is necessary for YWHAE binding and efficient surface expression. In terms of processing, O-glycosylated. Sialylated O-glycans in the N-terminal tail inhibits binding of GPR15LG. Post-translationally, sulfation is required for efficient binding of GPR15LG.

It localises to the cell membrane. G protein-coupled receptor that plays an important role in immune homeostasis. Acts via its natural ligand GPR15LG, a chemokine-like polypeptide strongly expressed in gastrointestinal tissues. GPR15-GPR15LG signaling axis regulates intestinal homeostasis and inflammation through the migration of immune cells. Controls thereby the specific homing of T-cells, particularly FOXP3+ regulatory T-cells (Tregs), to the large intestine lamina propria. Also required for skin localization of thymus-derived dendritic epidermal T-cells. Plays an important role in mediating cytoprotective function as well as angiogenesis of thrombomodulin. Mechanistically, preferentially signals through the Gi/o pathway to inhibit adenylate cyclase activity and activate a phosphatidylinositol-calcium second messenger system that regulates the release of Ca(2+) ions from intracellular stores. In Macaca fascicularis (Crab-eating macaque), this protein is G-protein coupled receptor 15 (GPR15).